A 67-amino-acid chain; its full sequence is Myrmicitoxin(1)-Pm6a (67 aa).

Residues 1 to 25 (MRSLYLSFSLTIIFVLVIMHAEAKA) form the signal peptide. A propeptide spanning residues 26 to 37 (ISEPNAIAEADP) is cleaved from the precursor. Residue V66 is modified to Valine amide.

It belongs to the formicidae venom clade 3 family. Expressed by the venom gland.

It is found in the secreted. Toxin that causes a rapid and irreversible paralysis when intrathoracically injected into insects (blowflies). Does not cause spontaneous nocifensive behaviors by intraplantar injection in mice. Exhibits hemolytic and cytotoxic activities on HEK293 cells. This Pogonomyrmex maricopa (Maricopa harvester ant) protein is Myrmicitoxin(1)-Pm6a.